Reading from the N-terminus, the 258-residue chain is tRNA (guanine-N(7)-)-methyltransferase (258 aa).

Positions 1–42 (MPETPLMRDNGPVNHADQDAPAVPEEGQTKDSKGSRLHPRVT) are disordered. E90, E115, D142, and D165 together coordinate S-adenosyl-L-methionine. D165 is a catalytic residue. Residues K169, D201, and 235–238 (TKFE) each bind substrate.

Belongs to the class I-like SAM-binding methyltransferase superfamily. TrmB family.

It carries out the reaction guanosine(46) in tRNA + S-adenosyl-L-methionine = N(7)-methylguanosine(46) in tRNA + S-adenosyl-L-homocysteine. It functions in the pathway tRNA modification; N(7)-methylguanine-tRNA biosynthesis. Functionally, catalyzes the formation of N(7)-methylguanine at position 46 (m7G46) in tRNA. The chain is tRNA (guanine-N(7)-)-methyltransferase from Rhodococcus jostii (strain RHA1).